An 81-amino-acid polypeptide reads, in one-letter code: Large ribosomal subunit protein bL27 (81 aa).

Positions 1–11 are enriched in polar residues; that stretch reads MATSKSGGSSK. Residues 1–26 form a disordered region; sequence MATSKSGGSSKNGRDSISKRLGVKRS.

Belongs to the bacterial ribosomal protein bL27 family.

This Borrelia turicatae (strain 91E135) protein is Large ribosomal subunit protein bL27.